We begin with the raw amino-acid sequence, 83 residues long: Cytotoxin homolog 5V (83 aa).

The N-terminal stretch at 1 to 21 (MKTLLLTLVVVTIVCLDLGYT) is a signal peptide. 4 disulfide bridges follow: Cys-24/Cys-43, Cys-36/Cys-61, Cys-65/Cys-76, and Cys-77/Cys-82.

The protein belongs to the three-finger toxin family. Short-chain subfamily. Orphan group XV sub-subfamily. Expressed by the venom gland.

It localises to the secreted. The protein resides in the target cell membrane. Has low cytotoxic activity. The sequence is that of Cytotoxin homolog 5V from Naja atra (Chinese cobra).